The sequence spans 305 residues: Superoxide dismutase [Fe] 2, chloroplastic (305 aa).

The N-terminal 46 residues, 1 to 46 (MMNVAVTATPSSLLYSPLLLPSQGPNRRMQWKRNGKRRLGTKVAVS), are a transit peptide targeting the chloroplast. Fe cation is bound by residues H77, H129, D228, and H232. Positions 270 to 305 (AVQREQEGTETEDEENPDDEVPEVYLDSDIDVSEVD) are disordered. A compositionally biased stretch (acidic residues) spans 277–305 (GTETEDEENPDDEVPEVYLDSDIDVSEVD).

It belongs to the iron/manganese superoxide dismutase family. As to quaternary structure, heterodimer with FSD3. Interacts with MRL7 and PRDA1. Fe cation is required as a cofactor.

The protein localises to the plastid. It localises to the chloroplast thylakoid. It catalyses the reaction 2 superoxide + 2 H(+) = H2O2 + O2. With respect to regulation, activated by cpn20/cpn21 (in vitro). Destroys superoxide anion radicals which are normally produced within the cells and which are toxic to biological systems. Plays important role in chloroplast development, particularly in the maintenance of thylakoids membranes. Seems to act as a heterodimer with FSD3. The protein is Superoxide dismutase [Fe] 2, chloroplastic (FSD2) of Arabidopsis thaliana (Mouse-ear cress).